Reading from the N-terminus, the 492-residue chain is N-succinylglutamate 5-semialdehyde dehydrogenase (492 aa).

NAD(+) is bound at residue 220–225 (GSASTG). Catalysis depends on residues Glu-243 and Cys-277.

Belongs to the aldehyde dehydrogenase family. AstD subfamily.

The enzyme catalyses N-succinyl-L-glutamate 5-semialdehyde + NAD(+) + H2O = N-succinyl-L-glutamate + NADH + 2 H(+). It functions in the pathway amino-acid degradation; L-arginine degradation via AST pathway; L-glutamate and succinate from L-arginine: step 4/5. Its function is as follows. Catalyzes the NAD-dependent reduction of succinylglutamate semialdehyde into succinylglutamate. The protein is N-succinylglutamate 5-semialdehyde dehydrogenase of Salmonella paratyphi C (strain RKS4594).